An 872-amino-acid polypeptide reads, in one-letter code: Leucine--tRNA ligase (872 aa).

Positions 42–52 match the 'HIGH' region motif; sequence PYPSGNLHMGH. The 'KMSKS' region signature appears at 631–635; it reads KMSKS. Lysine 634 serves as a coordination point for ATP.

This sequence belongs to the class-I aminoacyl-tRNA synthetase family.

The protein localises to the cytoplasm. The enzyme catalyses tRNA(Leu) + L-leucine + ATP = L-leucyl-tRNA(Leu) + AMP + diphosphate. This Blochmanniella pennsylvanica (strain BPEN) protein is Leucine--tRNA ligase.